A 260-amino-acid polypeptide reads, in one-letter code: Achaete-scute homolog 2 (260 aa).

Disordered regions lie at residues 85–126 and 191–239; these read AGAC…RNER and PATR…EDSS. Composition is skewed to low complexity over residues 110–121 and 200–218; these read ATEASSSSAAVA and TQPS…STSP. One can recognise a bHLH domain in the interval 118–170; the sequence is AAVARRNERERNRVKLVNLGFQALRQHVPHGGANKKLSKVETLRSAVEYIRAL.

In terms of assembly, efficient DNA binding requires dimerization with another bHLH protein. Forms heterodimers with bHLH transcription factor TCF3. May not heterodimerise with bHLH protein HAND1. In terms of tissue distribution, expressed in Schwann cells in the peripheral nerve (at protein level). Also expressed by endothelial cells (at protein level). May be expressed in neuronal precursor cells.

It localises to the nucleus. The protein localises to the cytoplasm. Transcription factor. Binds to E-box motifs 5'-CANNTG-3' in the regulatory elements of target genes, probably as a heterodimer with another basic helix-loop-helix (bHLH) protein such as the transcription factor TCF3. May bind both open and closed chromatin, acting as a pioneer transcription factor to allow other factors to bind and activate lineage-specific genes. Required during post-implantation development for the generation of some differentiated trophoblast cell types. Transcriptional activity of ASCL2 may be antagonised in a subset of trophoblast cells by bHLH transcription factor HAND1, perhaps by competing for dimerization with other bHLH proteins. Involved in differentiation and function of follicular T-helper (Tfh) cells, thereby playing a role in germinal center responses; probably modulates expression of genes involved in Tfh cell function, such as BCL6. May also act as a suppressor of Th1-, Th2- and Th17-cell differentiation. Induces the formation of stem cells in intestinal crypts in vitro, synergistically activating transcription of target genes, such as SOX9, together with TCF4/beta-catenin. May form a bistable transcriptional switch, controlling expression of its own gene together with Wnt/R-spondin signaling, and thereby maintaining stem cell characteristics. Modulates expression of target genes, including perhaps down-regulating EGR1/Krox24 and chemokine CXCL10/Mob-1 and up-regulating CXCR4 and CDKN1C/p57kip2, in Schwann cells. May play a role in reducing proliferation of Schwann cells, perhaps acting via modulation of expression of CDKN1C. May be dispensable for blastocyst formation and later embryonic function. May be involved in the determination of neuronal precursors. The protein is Achaete-scute homolog 2 (Ascl2) of Rattus norvegicus (Rat).